The primary structure comprises 162 residues: Probable chemoreceptor glutamine deamidase CheD (162 aa).

Belongs to the CheD family.

It carries out the reaction L-glutaminyl-[protein] + H2O = L-glutamyl-[protein] + NH4(+). In terms of biological role, probably deamidates glutamine residues to glutamate on methyl-accepting chemotaxis receptors (MCPs), playing an important role in chemotaxis. This is Probable chemoreceptor glutamine deamidase CheD from Clostridium botulinum (strain Alaska E43 / Type E3).